A 152-amino-acid chain; its full sequence is Large ribosomal subunit protein bL9 (152 aa).

Belongs to the bacterial ribosomal protein bL9 family.

Its function is as follows. Binds to the 23S rRNA. The polypeptide is Large ribosomal subunit protein bL9 (Chlorobaculum tepidum (strain ATCC 49652 / DSM 12025 / NBRC 103806 / TLS) (Chlorobium tepidum)).